A 257-amino-acid polypeptide reads, in one-letter code: Ribonuclease PH (257 aa).

Phosphate contacts are provided by residues Arg-87 and 125–127; that span reads GTR.

The protein belongs to the RNase PH family. In terms of assembly, homohexameric ring arranged as a trimer of dimers.

The catalysed reaction is tRNA(n+1) + phosphate = tRNA(n) + a ribonucleoside 5'-diphosphate. Functionally, phosphorolytic 3'-5' exoribonuclease that plays an important role in tRNA 3'-end maturation. Removes nucleotide residues following the 3'-CCA terminus of tRNAs; can also add nucleotides to the ends of RNA molecules by using nucleoside diphosphates as substrates, but this may not be physiologically important. Probably plays a role in initiation of 16S rRNA degradation (leading to ribosome degradation) during starvation. This Geobacillus kaustophilus (strain HTA426) protein is Ribonuclease PH.